The following is a 251-amino-acid chain: Chlorophyll a-b binding protein 4, chloroplastic (251 aa).

Position 35 is a phosphoserine (Ser-35). Trp-57 contacts chlorophyll b. 2 residues coordinate chlorophyll a: Phe-77 and Glu-96. Position 101 (Arg-101) interacts with chlorophyll b. 2 consecutive transmembrane segments (helical) span residues 102–122 (WAML…IGII) and 135–155 (YFAS…YVEI). Chlorophyll b is bound by residues Ser-138, Val-144, Glu-154, and Arg-157. Chlorophyll a is bound by residues Lys-204, Glu-205, Asn-208, Arg-210, Gln-222, and His-237.

It belongs to the light-harvesting chlorophyll a/b-binding (LHC) protein family. The LHC complex consists of chlorophyll a-b binding proteins. Red-emitting heterodimer with LHCA1. Binds at least 14 chlorophylls (8 Chl-a and 6 Chl-b) and carotenoids such as lutein and neoxanthin. serves as cofactor. Photoregulated by reversible phosphorylation of its threonine residues.

It localises to the plastid. It is found in the chloroplast thylakoid membrane. Functionally, the light-harvesting complex (LHC) functions as a light receptor, it captures and delivers excitation energy to photosystems with which it is closely associated. The chain is Chlorophyll a-b binding protein 4, chloroplastic from Arabidopsis thaliana (Mouse-ear cress).